The sequence spans 283 residues: S-adenosylmethionine mitochondrial carrier protein homolog (283 aa).

Solcar repeat units follow at residues 11-84 (LKFF…GKQF), 93-178 (DSPY…FKLQ), and 187-275 (STPF…TTRI). 6 helical membrane-spanning segments follow: residues 14–34 (FHALVAGGVAGMVVDIALFPI), 55–75 (GIYKGLAPAAAGSAPTAALFF), 99–119 (MAAASAAEVLACLIRVPVEIA), 152–172 (RGFGSTIMREIPFSLIQFPLW), 190–210 (FSVALCGAVAGGISAGLTTPL), and 248–268 (FAGFVPRVLWITLGGAFFFGF).

The protein belongs to the mitochondrial carrier (TC 2.A.29) family.

It is found in the mitochondrion inner membrane. Its function is as follows. Mitochondrial solute carriers shuttle metabolites, nucleotides, and cofactors through the mitochondrial inner membrane. May mediate the transport of S-adenosylmethionine (SAM) into the mitochondria. In Drosophila melanogaster (Fruit fly), this protein is S-adenosylmethionine mitochondrial carrier protein homolog.